A 334-amino-acid chain; its full sequence is G-protein coupled receptor 12 (334 aa).

The Extracellular segment spans residues 1–48; that stretch reads MNEDLKVNLSGLPRDYLDAAAAENISAAVSSRVPAVEPEPELVVNPWD. Asn8 and Asn24 each carry an N-linked (GlcNAc...) asparagine glycan. A helical transmembrane segment spans residues 49–69; sequence IVLCTSGTLISCENAIVVLII. Over 70 to 77 the chain is Cytoplasmic; sequence FHNPSLRA. A helical membrane pass occupies residues 78 to 98; it reads PMFLLIGSLALADLLAGIGLI. Over 99 to 113 the chain is Extracellular; sequence TNFVFAYLLQSEATK. A helical membrane pass occupies residues 114–134; sequence LVTIGLIVASFSASVCSLLAI. Residues 135–158 lie on the Cytoplasmic side of the membrane; sequence TVDRYLSLYYALTYHSERTVTFTY. Residues 159 to 179 form a helical membrane-spanning segment; the sequence is VMLVMLWGTSICLGLLPVMGW. Over 180-199 the chain is Extracellular; sequence NCLRDESTCSVVRPLTKNNA. A helical membrane pass occupies residues 200 to 220; that stretch reads AILSVSFLFMFALMLQLYIQI. At 221-252 the chain is on the cytoplasmic side; it reads CKIVMRHAHQIALQHHFLATSHYVTTRKGVST. A helical transmembrane segment spans residues 253–273; that stretch reads LAIILGTFAACWMPFTLYSLI. Residues 274-282 lie on the Extracellular side of the membrane; the sequence is ADYTYPSIY. The chain crosses the membrane as a helical span at residues 283-303; it reads TYATLLPATYNSIINPVIYAF. The Cytoplasmic segment spans residues 304-334; that stretch reads RNQEIQKALCLICCGCIPSSLAQRARSPSDV. Residue Cys317 is the site of S-palmitoyl cysteine attachment. A phosphoserine mark is found at Ser330 and Ser332.

This sequence belongs to the G-protein coupled receptor 1 family.

Its subcellular location is the cell membrane. Functionally, promotes neurite outgrowth and blocks myelin inhibition in neurons. Receptor with constitutive G(s) signaling activity that stimulates cyclic AMP production. This Homo sapiens (Human) protein is G-protein coupled receptor 12 (GPR12).